Reading from the N-terminus, the 1390-residue chain is MAQQTFTGRKRVRKFFGHIREVAEMPNLIEVQKASYDQFLMVAEPPGGRDDEGLQAVFRSVFPISDFSNASMLEFVRYEFEPPKYDVDECRQRGMTYAAPLKVTLRLIVFDIDEETGARSVKDIKEQDVYMGDIPLMTMNGTFVVNGTERVIVSQMHRSPGVFFDHDKGKTHSSGKLLFAARVIPYRGSWLDIEFDAKDIVFARIDRRRKIPVTSLMFALGLDGEEILSTFYNKILYKRTKEGWRVPFDASRFRGYSTVNDLIDADTGKVVLEAGKKLTVRAARQLQEKGLKALRLSDSELVGNYLAEDLVNPKTGEIFAEAGDELTGKPIKGDDKEIELFVGATPMKAILEQGYKELPLLDIDHVNVGPYIRNTLSADKNMTREDALFDIYRVMRPGEPPTLDSAQNMFQSLFFDAERYDLSAVGRVKMNMRLDLDAPDTHRTLRKEDILAVIKTLVGLRDGKGEIDDIDHLGNRRVRSVGELMENQYRIGLLRMERAIKERMSSVDIDTVMPQDLINAKPAAAAVREFFGSSQLSQFMDQTNPLSEITHKRRLSALGPGGLTRERAGFEVRDVHPTHYGRICPIETPEGPNIGLINSLATFARVNKYGFVETPYRKVKEGRVTDEVVYLSAMEEGRYAVAQANISLDAKGRFTDDLIVCRAGGTRDVVLIPADQVDYMDVSPKQLVSVAAALIPFLENDDANRALMGSNMQRQAVPLVRAEAPFVGTGMEGVVARDSGAAIAARRTGVIDQIDATRIVIRATEDLDPTKSGVDIYRLMKYQRSNQSTCINQRPLVKVGDKVAKGDIIADGPSTDLGELALGRNVLVAFMPWNGYNFEDSILLSERIVKEDVFTSIHIEEFEVMARDTKLGPEEITRDIPNVSEEALKNLDEAGIVYIGAEVRAGDILVGKITPKGESPMTPEEKLLRAIFGEKASDVRDTSLRVPPGVQGTIVEVRVFNRHGVDKDERALAIEREEIERLAKDRDDEQAILDRNVYGRLADLLDNRQGVAGPKGFKKDTKITRAVLEEYPKSQWWLFASPNDKLMAEIEAMRKQYDESKKGLEQRFLDKVEKLQRGDELPPGVMKMVKVFVAVKRKIQPGDKMAGRHGNKGVVSKIVPIEDMPFLEDGTHADIVLNPLGVPSRMNVGQILETHLGWACAGMGKKIGQTIDAYYQRQDLKPLRETLKKIYGDDETIKSLDDGELIELGRNLSHGVPIATPVFDGAKEADIEEMLKLAGFDASGQSTVYDGRTGDEFDRKVTVGYIYMLKLHHLVDDKIHARSIGPYSLVTQQPLGGKAQFGGQRFGEMEVWALEAYGAAYTLQEMLTVKSDDVAGRTKVYEAIVRGDDTFEAGIPESFNVLVKEMRSLGLNVDLHNSKLGVPPPAEAAE.

Belongs to the RNA polymerase beta chain family. In terms of assembly, the RNAP catalytic core consists of 2 alpha, 1 beta, 1 beta' and 1 omega subunit. When a sigma factor is associated with the core the holoenzyme is formed, which can initiate transcription.

The enzyme catalyses RNA(n) + a ribonucleoside 5'-triphosphate = RNA(n+1) + diphosphate. In terms of biological role, DNA-dependent RNA polymerase catalyzes the transcription of DNA into RNA using the four ribonucleoside triphosphates as substrates. The polypeptide is DNA-directed RNA polymerase subunit beta (Rhodopseudomonas palustris (strain HaA2)).